The chain runs to 413 residues: Tyrosine--tRNA ligase 2 (413 aa).

The 'HIGH' region signature appears at 58–67 (PSAPDVHLGH). 2 consecutive repeat copies span residues 89-94 (GDFTGK) and 96-101 (GDPTGK). Residues 89–101 (GDFTGKIGDPTGK) are 2 X 6 AA tandem repeats. The short motif at 242–246 (KMSKS) is the 'KMSKS' region element. Lys-245 contacts ATP. The S4 RNA-binding domain maps to 353–413 (IAMIDLLVKL…VGKRKFLKLQ (61 aa)).

This sequence belongs to the class-I aminoacyl-tRNA synthetase family. TyrS type 2 subfamily. As to quaternary structure, homodimer.

It localises to the cytoplasm. It catalyses the reaction tRNA(Tyr) + L-tyrosine + ATP = L-tyrosyl-tRNA(Tyr) + AMP + diphosphate + H(+). Its function is as follows. Catalyzes the attachment of tyrosine to tRNA(Tyr) in a two-step reaction: tyrosine is first activated by ATP to form Tyr-AMP and then transferred to the acceptor end of tRNA(Tyr). This is Tyrosine--tRNA ligase 2 from Bacillus subtilis (strain 168).